The primary structure comprises 278 residues: 4-diphosphocytidyl-2-C-methyl-D-erythritol kinase (278 aa).

K9 is a catalytic residue. Position 89 to 99 (89 to 99 (PVASGIGGGSA)) interacts with ATP. D128 is a catalytic residue.

It belongs to the GHMP kinase family. IspE subfamily.

The enzyme catalyses 4-CDP-2-C-methyl-D-erythritol + ATP = 4-CDP-2-C-methyl-D-erythritol 2-phosphate + ADP + H(+). It functions in the pathway isoprenoid biosynthesis; isopentenyl diphosphate biosynthesis via DXP pathway; isopentenyl diphosphate from 1-deoxy-D-xylulose 5-phosphate: step 3/6. Functionally, catalyzes the phosphorylation of the position 2 hydroxy group of 4-diphosphocytidyl-2C-methyl-D-erythritol. The protein is 4-diphosphocytidyl-2-C-methyl-D-erythritol kinase of Cereibacter sphaeroides (strain KD131 / KCTC 12085) (Rhodobacter sphaeroides).